Reading from the N-terminus, the 38-residue chain is MTQPNPNKQSVELNRTSLYWGLLLIFVLAVSFSNYFFN.

The helical transmembrane segment at 17–37 (SLYWGLLLIFVLAVSFSNYFF) threads the bilayer.

Belongs to the PsbL family. In terms of assembly, PSII is composed of 1 copy each of membrane proteins PsbA, PsbB, PsbC, PsbD, PsbE, PsbF, PsbH, PsbI, PsbJ, PsbK, PsbL, PsbM, PsbT, PsbX, PsbY, PsbZ, Psb30/Ycf12, at least 3 peripheral proteins of the oxygen-evolving complex and a large number of cofactors. It forms dimeric complexes.

The protein resides in the plastid membrane. Functionally, one of the components of the core complex of photosystem II (PSII). PSII is a light-driven water:plastoquinone oxidoreductase that uses light energy to abstract electrons from H(2)O, generating O(2) and a proton gradient subsequently used for ATP formation. It consists of a core antenna complex that captures photons, and an electron transfer chain that converts photonic excitation into a charge separation. This subunit is found at the monomer-monomer interface and is required for correct PSII assembly and/or dimerization. In Aneura mirabilis (Parasitic liverwort), this protein is Photosystem II reaction center protein L.